The following is a 561-amino-acid chain: MAAEEMHWPVPMKAIGAQNLLTMPGGVAKAGYLHKKGGTQLQLLKWPLRFVIIHKRCVYYFKSSTSASPQGAFSLSGYNRVMRAAEETTSNNVFPFKIIHISKKHRTWFFSASSEEERKSWMALLRREIGHFHEKKDLPLDTSDSSSDTDSFYGAVERPVDISLSPYPTDNEDYEHDDEDDSYLEPDSPEPGRLEDALMHPPAYPPPPVPTPRKPAFSDMPRAHSFTSKGPGPLLPPPPPKHGLPDVGLAAEDSKRDPLCPRRAEPCPRVPATPRRMSDPPLSTMPTAPGLRKPPCFRESASPSPEPWTPGHGACSTSSAAIMATATSRNCDKLKSFHLSPRGPPTSEPPPVPANKPKFLKIAEEDPPREAAMPGLFVPPVAPRPPALKLPVPEAMARPAVLPRPEKPQLPHLQRSPPDGQSFRSFSFEKPRQPSQADTGGDDSDEDYEKVPLPNSVFVNTTESCEVERLFKATSPRGEPQDGLYCIRNSSTKSGKVLVVWDETSNKVRNYRIFEKDSKFYLEGEVLFVSVGSMVEHYHTHVLPSHQSLLLRHPYGYTGPR.

Residues Gly26 to Gly130 form the PH domain. Disordered stretches follow at residues Val160–Ser316 and Lys333–Val451. Residues Asp170–Ser188 are compositionally biased toward acidic residues. A phosphotyrosine; by SYK mark is found at Tyr174 and Tyr183. Residues Pro201–Pro210 carry the SH3-binding motif. 2 stretches are compositionally biased toward pro residues: residues Pro202–Arg213 and Pro233–His242. Residues Glu252 to Pro266 are compositionally biased toward basic and acidic residues. A Phosphoserine modification is found at Ser278. Residues Arg342–Ala354 are compositionally biased toward pro residues. Phosphoserine occurs at positions 416 and 427. Position 448 is a phosphotyrosine; by SYK (Tyr448). Residues Val457–Tyr555 form the SH2 domain.

In terms of processing, phosphorylated. Phosphorylation at Tyr-448 may stimulate the activity of the LYN kinase. In terms of tissue distribution, expressed in a variety of tissues including lung, liver, skeletal muscle, kidney and pancreas.

In terms of biological role, binds differentially to the SH3 domains of certain proteins of signal transduction pathways. Binds to phosphatidylinositols; linking the hemopoietic tyrosine kinase fes to the cytoplasmic membrane in a phosphorylation dependent mechanism. This chain is SH3 domain-binding protein 2 (SH3BP2), found in Homo sapiens (Human).